A 148-amino-acid polypeptide reads, in one-letter code: Hemoglobin subunit gamma (148 aa).

Residues 3 to 148 (HFTAEEKAII…VAIAMGHKYH (146 aa)) form the Globin domain. Heme b contacts are provided by His-64 and His-93.

This sequence belongs to the globin family. In terms of assembly, heterotetramer of two alpha chains and two gamma chains in fetal hemoglobin (Hb F). In terms of tissue distribution, red blood cells.

Functionally, gamma chains make up the fetal hemoglobin F, in combination with alpha chains. The chain is Hemoglobin subunit gamma (HBG) from Carlito syrichta (Philippine tarsier).